The following is a 1062-amino-acid chain: Zinc finger protein swm (1062 aa).

Residues 7–75 (DKLKDWLSVV…ERLFDAIASE (69 aa)) enclose the PWI domain. 2 disordered regions span residues 119–145 (ADSP…QASQ) and 171–340 (KPAF…PDRV). Residues 134–145 (DSNQVKLEQASQ) show a composition bias toward polar residues. The span at 172-182 (PAFDHKTKDSH) shows a compositional bias: basic and acidic residues. A compositionally biased stretch (low complexity) spans 197-207 (SASPPGRSSGV). Over residues 208–220 (SGSGGGGPGGAGL) the composition is skewed to gly residues. The span at 234 to 249 (SRRRRASLRSRSRSRS) shows a compositional bias: basic residues. Composition is skewed to basic and acidic residues over residues 264-273 (RRVNEREKTQ) and 294-310 (RNFD…DRPR). Over residues 322 to 340 (RSMSPERNARRNQNSPDRV) the composition is skewed to polar residues. The segment at 363-391 (SHPRQRCRDFDEKGYCVRGETCPWDHGVN) adopts a C3H1-type zinc-finger fold. Positions 416 to 463 (EIWARSGGPPPGAGQGPVPPPTQPGQTTINPFSGNVRPTTLMSGSGPS) are disordered. Residues 423–438 (GPPPGAGQGPVPPPTQ) show a composition bias toward pro residues. Over residues 444-461 (INPFSGNVRPTTLMSGSG) the composition is skewed to polar residues. An RRM domain is found at 561-635 (SSLELRKVPR…RFIKVFWHND (75 aa)). 5 disordered regions span residues 666–704 (NVPA…QANT), 716–741 (TTTA…LNPA), 822–847 (QDQL…KEQQ), 886–920 (SAAN…PTRV), and 1004–1062 (APVE…SWRR). Over residues 721 to 733 (GSAGGAAGAGAPG) the composition is skewed to gly residues. Low complexity predominate over residues 823–840 (DQLQAQMQQQQQQQQPPV). The span at 1018-1037 (SLENPKQLIQSVSESESLLG) shows a compositional bias: polar residues. Residues 1046–1056 (LEDEEEDEESE) show a composition bias toward acidic residues.

It localises to the nucleus. Functionally, negatively regulates Hedgehog (hh) protein signal in wing development. Regulates neural-specific glycosylation by binding to FucTA mRNA and facilitating its nuclear export in neural cells. This chain is Zinc finger protein swm, found in Drosophila melanogaster (Fruit fly).